A 306-amino-acid chain; its full sequence is Mitochondrial uncoupling protein 1 (306 aa).

Solcar repeat units follow at residues 9–102 (LSLP…VKNL), 112–203 (VPLS…VKET), and 212–296 (DNVV…AKKY). Transmembrane regions (helical) follow at residues 15–35 (FACS…LDTA), 71–91 (LRSL…FGGL), 118–138 (ILAG…TDLV), 177–197 (TGLG…LASY), 218–238 (ILSG…VDVV), and 269–289 (YKGF…MFLT).

Belongs to the mitochondrial carrier (TC 2.A.29) family. In terms of tissue distribution, widely expressed.

The protein resides in the mitochondrion inner membrane. Functionally, PUMPS are mitochondrial transporter proteins that create proton leaks across the inner mitochondrial membrane, thus uncoupling oxidative phosphorylation. This leads to a decrease in the efficiency of oxidative phosphorylation and an increase in heat production. Is involved in protecting plant cells against oxidative stress damage and maintaining the redox balance of the mitochondrial electron transport chain to facilitate photosynthetic metabolism. May play a regulatory role during photorespiration. The sequence is that of Mitochondrial uncoupling protein 1 (PUMP1) from Arabidopsis thaliana (Mouse-ear cress).